Here is an 859-residue protein sequence, read N- to C-terminus: Homeobox-leucine zipper protein HOX32 (859 aa).

The disordered stretch occupies residues 7-31; the sequence is AAVHGVGRQDRSSPGGGGAPQVDTG. Positions 29–92 form a DNA-binding region, homeobox; that stretch reads DTGKYVRYTP…NRRCREKQRK (64 aa). A coiled-coil region spans residues 100-129; that stretch reads VNRKLTAMNKLLMEENDRLQKQVSRLVYEN. Residues 146–164 show a composition bias toward polar residues; the sequence is TSCESVVTSGQHHQQQNPA. The disordered stretch occupies residues 146–172; it reads TSCESVVTSGQHHQQQNPAATRPQRDA. Residues 171 to 393 form the START domain; that stretch reads DANNPAGLLA…LRHIRQIAHE (223 aa).

It belongs to the HD-ZIP homeobox family. Class III subfamily. Expressed in seedlings, roots, stems, leaf sheaths and blades and panicles.

The protein localises to the nucleus. Probable transcription factor. This is Homeobox-leucine zipper protein HOX32 (HOX32) from Oryza sativa subsp. indica (Rice).